A 93-amino-acid polypeptide reads, in one-letter code: Protein S100-A8 (93 aa).

2 EF-hand domains span residues Ile12–Arg47 and Ile46–Ala81. Zn(2+)-binding residues include His17 and His27. Asp33 is a binding site for Ca(2+). Cys42 carries the post-translational modification S-nitrosocysteine. Ca(2+) is bound by residues Asp59, Asn61, Asp63, and Glu70. His83 and His87 together coordinate Zn(2+).

This sequence belongs to the S-100 family. Homodimer. Preferentially exists as a heterodimer or heterotetramer with S100A9 known as calprotectin (S100A8/A9). S100A8 interacts with AGER, ATP2A2 and with the heterodimeric complex formed by TLR4 and LY96. Interacts with GAPDH. Calprotectin (S100A8/9) interacts with CEACAM3 and tubulin filaments in a calcium-dependent manner. Heterotetrameric calprotectin (S100A8/A9) interacts with ANXA6 and associates with tubulin filaments in activated monocytes. S100A8 and calprotectin (S100A8/9) interact with NCF2/P67PHOX, RAC1 and RAC2. Calprotectin (S100A8/9) interacts with CYBA and CYBB. Calprotectin (S100A8/9) interacts with NOS2 to form the iNOS-S100A8/A9 transnitrosylase complex; induced by LDL(ox). Calprotectin (S100A8/9) interacts with CD69. As to expression, calprotectin (S100A8/9) is predominantly expressed in myeloid cells. Except for inflammatory conditions, the expression is restricted to a specific stage of myeloid differentiation since both proteins are expressed in circulating neutrophils and monocytes but are absent in normal tissue macrophages and lymphocytes. Under chronic inflammatory conditions, such as psoriasis and malignant disorders, also expressed in the epidermis. Found in high concentrations at local sites of inflammation or in the serum of patients with inflammatory diseases such as rheumatoid, cystic fibrosis, inflammatory bowel disease, Crohn's disease, giant cell arteritis, cystic fibrosis, Sjogren's syndrome, systemic lupus erythematosus, and progressive systemic sclerosis. Involved in the formation and deposition of amyloids in the aging prostate known as corpora amylacea inclusions. Strongly up-regulated in many tumors, including gastric, esophageal, colon, pancreatic, bladder, ovarian, thyroid, breast and skin cancers.

The protein resides in the secreted. It localises to the cytoplasm. The protein localises to the cytoskeleton. It is found in the cell membrane. With respect to regulation, calprotectin (S100A8/A9) activity on TLR4 signaling is inhibited by paquinimod. Functionally, S100A8 is a calcium- and zinc-binding protein which plays a prominent role in the regulation of inflammatory processes and immune response. It can induce neutrophil chemotaxis and adhesion. Predominantly found as calprotectin (S100A8/A9) which has a wide plethora of intra- and extracellular functions. The intracellular functions include: facilitating leukocyte arachidonic acid trafficking and metabolism, modulation of the tubulin-dependent cytoskeleton during migration of phagocytes and activation of the neutrophilic NADPH-oxidase. Also participates in regulatory T-cell differentiation together with CD69. Activates NADPH-oxidase by facilitating the enzyme complex assembly at the cell membrane, transferring arachidonic acid, an essential cofactor, to the enzyme complex and S100A8 contributes to the enzyme assembly by directly binding to NCF2/P67PHOX. The extracellular functions involve pro-inflammatory, antimicrobial, oxidant-scavenging and apoptosis-inducing activities. Its pro-inflammatory activity includes recruitment of leukocytes, promotion of cytokine and chemokine production, and regulation of leukocyte adhesion and migration. Acts as an alarmin or a danger associated molecular pattern (DAMP) molecule and stimulates innate immune cells via binding to pattern recognition receptors such as Toll-like receptor 4 (TLR4) and receptor for advanced glycation endproducts (AGER). Binding to TLR4 and AGER activates the MAP-kinase and NF-kappa-B signaling pathways resulting in the amplification of the pro-inflammatory cascade. Has antimicrobial activity towards bacteria and fungi and exerts its antimicrobial activity probably via chelation of Zn(2+) which is essential for microbial growth. Can induce cell death via autophagy and apoptosis and this occurs through the cross-talk of mitochondria and lysosomes via reactive oxygen species (ROS) and the process involves BNIP3. Can regulate neutrophil number and apoptosis by an anti-apoptotic effect; regulates cell survival via ITGAM/ITGB and TLR4 and a signaling mechanism involving MEK-ERK. Its role as an oxidant scavenger has a protective role in preventing exaggerated tissue damage by scavenging oxidants. Can act as a potent amplifier of inflammation in autoimmunity as well as in cancer development and tumor spread. The iNOS-S100A8/A9 transnitrosylase complex directs selective inflammatory stimulus-dependent S-nitrosylation of GAPDH and probably multiple targets such as ANXA5, EZR, MSN and VIM by recognizing a [IL]-x-C-x-x-[DE] motif; S100A8 seems to contribute to S-nitrosylation site selectivity. (Microbial infection) Upon infection by human coronavirus SARS-CoV-2, may induce expansion of aberrant immature neutrophils in a TLR4-dependent manner. This Homo sapiens (Human) protein is Protein S100-A8.